The following is a 386-amino-acid chain: Cystathionine gamma-synthase (386 aa).

Lysine 198 is subject to N6-(pyridoxal phosphate)lysine.

This sequence belongs to the trans-sulfuration enzymes family. As to quaternary structure, homotetramer. The cofactor is pyridoxal 5'-phosphate.

It localises to the cytoplasm. The enzyme catalyses O-succinyl-L-homoserine + L-cysteine = L,L-cystathionine + succinate + H(+). Its pathway is amino-acid biosynthesis; L-methionine biosynthesis via de novo pathway; L-cystathionine from O-succinyl-L-homoserine: step 1/1. In terms of biological role, catalyzes the formation of L-cystathionine from O-succinyl-L-homoserine (OSHS) and L-cysteine, via a gamma-replacement reaction. In the absence of thiol, catalyzes gamma-elimination to form 2-oxobutanoate, succinate and ammonia. This is Cystathionine gamma-synthase (metB) from Escherichia coli (strain K12).